The primary structure comprises 446 residues: Tubulin beta-1 chain (446 aa).

The GTP site is built by Gln11, Glu69, Ser138, Gly142, Thr143, Gly144, Asn204, and Asn226. Glu69 is a binding site for Mg(2+).

Belongs to the tubulin family. In terms of assembly, dimer of alpha and beta chains. A typical microtubule is a hollow water-filled tube with an outer diameter of 25 nm and an inner diameter of 15 nM. Alpha-beta heterodimers associate head-to-tail to form protofilaments running lengthwise along the microtubule wall with the beta-tubulin subunit facing the microtubule plus end conferring a structural polarity. Microtubules usually have 13 protofilaments but different protofilament numbers can be found in some organisms and specialized cells. The cofactor is Mg(2+).

It localises to the cytoplasm. The protein localises to the cytoskeleton. Functionally, tubulin is the major constituent of microtubules, a cylinder consisting of laterally associated linear protofilaments composed of alpha- and beta-tubulin heterodimers. Microtubules grow by the addition of GTP-tubulin dimers to the microtubule end, where a stabilizing cap forms. Below the cap, tubulin dimers are in GDP-bound state, owing to GTPase activity of alpha-tubulin. The polypeptide is Tubulin beta-1 chain (TUBB1) (Suillus bovinus (Jersey cow bolete)).